We begin with the raw amino-acid sequence, 306 residues long: MKSKSLVSIDQCSKEDILRILDNARKFEENPNRKLLEGKVAATLFFEPSTRTRLSFETAVNRLGGRVIGFSDASTTSSSKGETLKDTILMVSNYVDLIIMRHHLEGAARYASEVTDVPIINAGDGANQHPSQTMLDLYSIRKTQGKLDNLTITMVGDLKYGRTVHSLIVGMSHFHPTFHFVAPNELRMPDEQKNFCDKHGLKYEEHTDFTEDIINQTDILYMTRVQRERFTDLEEYERVKNVYILRNDMLRNSRENLRILHPLPRVNEIAYDVDDNPKAYYIQQARNGLFARQAIICEVLGISIDE.

Carbamoyl phosphate-binding residues include Arg-51 and Thr-52. Lys-80 lines the L-aspartate pocket. Carbamoyl phosphate contacts are provided by Arg-101, His-129, and Gln-132. L-aspartate-binding residues include Arg-162 and Arg-224. Carbamoyl phosphate is bound by residues Leu-263 and Pro-264.

Belongs to the aspartate/ornithine carbamoyltransferase superfamily. ATCase family. Heterododecamer (2C3:3R2) of six catalytic PyrB chains organized as two trimers (C3), and six regulatory PyrI chains organized as three dimers (R2).

The enzyme catalyses carbamoyl phosphate + L-aspartate = N-carbamoyl-L-aspartate + phosphate + H(+). It functions in the pathway pyrimidine metabolism; UMP biosynthesis via de novo pathway; (S)-dihydroorotate from bicarbonate: step 2/3. Catalyzes the condensation of carbamoyl phosphate and aspartate to form carbamoyl aspartate and inorganic phosphate, the committed step in the de novo pyrimidine nucleotide biosynthesis pathway. In Parabacteroides distasonis (strain ATCC 8503 / DSM 20701 / CIP 104284 / JCM 5825 / NCTC 11152), this protein is Aspartate carbamoyltransferase catalytic subunit.